The primary structure comprises 868 residues: Leucine--tRNA ligase (868 aa).

The short motif at 42–52 (PYPSGKLHMGH) is the 'HIGH' region element. The 'KMSKS' region signature appears at 624–628 (TMSKS). Residue Lys627 participates in ATP binding.

It belongs to the class-I aminoacyl-tRNA synthetase family.

Its subcellular location is the cytoplasm. The catalysed reaction is tRNA(Leu) + L-leucine + ATP = L-leucyl-tRNA(Leu) + AMP + diphosphate. In Nitrosomonas eutropha (strain DSM 101675 / C91 / Nm57), this protein is Leucine--tRNA ligase.